The primary structure comprises 99 residues: NADH-quinone oxidoreductase subunit K (99 aa).

The next 3 helical transmembrane spans lie at P2–L22, L28–F48, and I60–I80.

This sequence belongs to the complex I subunit 4L family. In terms of assembly, NDH-1 is composed of 14 different subunits. Subunits NuoA, H, J, K, L, M, N constitute the membrane sector of the complex.

It localises to the cell inner membrane. The catalysed reaction is a quinone + NADH + 5 H(+)(in) = a quinol + NAD(+) + 4 H(+)(out). Its function is as follows. NDH-1 shuttles electrons from NADH, via FMN and iron-sulfur (Fe-S) centers, to quinones in the respiratory chain. The immediate electron acceptor for the enzyme in this species is believed to be ubiquinone. Couples the redox reaction to proton translocation (for every two electrons transferred, four hydrogen ions are translocated across the cytoplasmic membrane), and thus conserves the redox energy in a proton gradient. This is NADH-quinone oxidoreductase subunit K from Anaeromyxobacter dehalogenans (strain 2CP-C).